The chain runs to 218 residues: Adenylate kinase (218 aa).

10 to 15 lines the ATP pocket; that stretch reads GAGKGT. The segment at 30 to 59 is NMP; that stretch reads STGDMLRAAVQAQTPVGIEAKKVMDAGKLV. AMP is bound by residues Thr-31, Arg-36, 57–59, 85–88, and Gln-92; these read KLV and GFPR. The LID stretch occupies residues 122-159; sequence GRRVHLSSGRTYHVRFNPPKKEGLDDLTGEPLVQREDD. Residues Arg-123 and 132–133 each bind ATP; that span reads TY. AMP contacts are provided by Arg-156 and Arg-167. Gly-203 is a binding site for ATP.

Belongs to the adenylate kinase family. Monomer.

The protein localises to the cytoplasm. The enzyme catalyses AMP + ATP = 2 ADP. It functions in the pathway purine metabolism; AMP biosynthesis via salvage pathway; AMP from ADP: step 1/1. Functionally, catalyzes the reversible transfer of the terminal phosphate group between ATP and AMP. Plays an important role in cellular energy homeostasis and in adenine nucleotide metabolism. In Chlorobium phaeobacteroides (strain DSM 266 / SMG 266 / 2430), this protein is Adenylate kinase.